The primary structure comprises 159 residues: Endoribonuclease YbeY (159 aa).

His126, His130, and His136 together coordinate Zn(2+).

This sequence belongs to the endoribonuclease YbeY family. It depends on Zn(2+) as a cofactor.

The protein localises to the cytoplasm. Functionally, single strand-specific metallo-endoribonuclease involved in late-stage 70S ribosome quality control and in maturation of the 3' terminus of the 16S rRNA. The chain is Endoribonuclease YbeY from Thermodesulfovibrio yellowstonii (strain ATCC 51303 / DSM 11347 / YP87).